A 285-amino-acid polypeptide reads, in one-letter code: Shikimate dehydrogenase (NADP(+)) (285 aa).

Residues 22–24 and Thr71 each bind shikimate; that span reads SRS. Lys75 acts as the Proton acceptor in catalysis. Residues Asn96 and Asp111 each coordinate shikimate. Residues 136-140, 160-165, and Ile225 contribute to the NADP(+) site; these read GAGGA and NRTVGR. Tyr227 provides a ligand contact to shikimate. Gly248 contributes to the NADP(+) binding site.

Belongs to the shikimate dehydrogenase family. In terms of assembly, homodimer.

The catalysed reaction is shikimate + NADP(+) = 3-dehydroshikimate + NADPH + H(+). Its pathway is metabolic intermediate biosynthesis; chorismate biosynthesis; chorismate from D-erythrose 4-phosphate and phosphoenolpyruvate: step 4/7. Its function is as follows. Involved in the biosynthesis of the chorismate, which leads to the biosynthesis of aromatic amino acids. Catalyzes the reversible NADPH linked reduction of 3-dehydroshikimate (DHSA) to yield shikimate (SA). This Rhizobium etli (strain CIAT 652) protein is Shikimate dehydrogenase (NADP(+)).